A 324-amino-acid polypeptide reads, in one-letter code: Mitochondrial oxaloacetate transport protein (324 aa).

3 Solcar repeats span residues 20–111 (ISKF…IRSS), 126–218 (QSVG…AKNI), and 227–312 (DGPA…TMKL). The next 6 helical transmembrane spans lie at 26–46 (FVAGGLAACIAVTVTNPIELI), 79–99 (GIKGLQKGLNAAYIYQIGLNG), 132–152 (VFSGAASGIIGAVIGSPLFLV), 193–213 (GIDAAILRTGAGSSVQLPIYN), 233–253 (LTASTISGLGVAVVMNPWDVI), and 284–305 (LYKGFAAQVFRIAPHTIMCLTF).

It belongs to the mitochondrial carrier (TC 2.A.29) family.

The protein localises to the mitochondrion inner membrane. It carries out the reaction a dicarboxylate(in) + sulfate(out) = a dicarboxylate(out) + sulfate(in). The enzyme catalyses (2S)-2-isopropylmalate(in) + sulfate(out) = (2S)-2-isopropylmalate(out) + sulfate(in). It catalyses the reaction (2R,3S)-3-isopropylmalate(in) + sulfate(out) = (2R,3S)-3-isopropylmalate(out) + sulfate(in). The catalysed reaction is malonate(in) + sulfate(out) = malonate(out) + sulfate(in). It carries out the reaction oxaloacetate(in) + sulfate(out) = oxaloacetate(out) + sulfate(in). The enzyme catalyses thiosulfate(in) + sulfate(out) = thiosulfate(out) + sulfate(in). Inhibited by alpha-keto isocaproate, an intermediate of leucine biosynthesis pathway. Antiporter that exchanges dicarboxylates and sulfur oxoanions across the inner membrane of mitochondria. Exports alpha-isopropylmalate from mitochondrial matrix to the cytosol, where it serves as a precursor for leucine biosynthesis. The chain is Mitochondrial oxaloacetate transport protein (OAC1) from Saccharomyces cerevisiae (strain ATCC 204508 / S288c) (Baker's yeast).